Reading from the N-terminus, the 323-residue chain is Ankyrin repeat and SOCS box protein 11 (323 aa).

ANK repeat units lie at residues 64 to 93, 97 to 126, 130 to 159, 162 to 191, 195 to 224, and 227 to 256; these read ADRSPLHEAAAQGRLLALKTLIAQGVNVNL, NRVSSLHEACLGGHVACAKALLENGAHVNG, HGATPLFNACCSGSAACVNVLLEFGAKAQL, HLASPIHEAVKRGNRECMEILLANNVNIDQ, HLGTPLYAACTYQRLDCVKKLLELGANVNH, and WLDTPLHAAAKQNSVEIIHLLIDYGANLKC. An SOCS box domain is found at 273–323; it reads SVEQALLLREGPPALSQLCRLCVRKCLGRNCHKTIHKLYLPDPLEKFLLYQ.

The protein belongs to the ankyrin SOCS box (ASB) family. Substrate-recognition component of the ECS(ASB11) complex, composed of ASB11, CUL5, ELOB, ELOC and RNF7/RBX2.

Its subcellular location is the endoplasmic reticulum. The protein operates within protein modification; protein ubiquitination. In terms of biological role, substrate-recognition component of a cullin-5-RING E3 ubiquitin-protein ligase complex (ECS complex, also named CRL5 complex), which mediates the ubiquitination and subsequent proteasomal degradation of target proteins, such as BIK, DIRAS2 and RPN1. The ECS(ASB11) complex acts as a regulator of the endoplasmic reticulum unfolded protein response by mediating ubiquitination and degradation of BIK. In Bos taurus (Bovine), this protein is Ankyrin repeat and SOCS box protein 11 (ASB11).